The following is a 178-amino-acid chain: MYHRLILLALIGTTMANVIPFSMSTIPEEYKEFIPEEVRNFYKDLTVEDKEILRELASKHATFANEDAALEALKAKSDNLYKNAVELRNFVKAKIDSLKPDAKTFVDEIIAKARSLRSDDGHKLDTEKIKQAARDIIAKYQALSEETKEELKVTFPAIAKIIGNEKLKRNASTFLQKN.

Residues 1–16 (MYHRLILLALIGTTMA) form the signal peptide. 2 coiled-coil regions span residues 67-89 (DAALEALKAKSDNLYKNAVELRN) and 130-153 (KQAARDIIAKYQALSEETKEELKV).

Belongs to the fatty-acid and retinol-binding protein (FARBP) family. In terms of processing, not glycosylated.

Its subcellular location is the secreted. In terms of biological role, binds retinol and different fatty acids. The chain is Fatty-acid and retinol-binding protein 1 from Wuchereria bancrofti.